Here is a 248-residue protein sequence, read N- to C-terminus: Octanoyltransferase (248 aa).

Residues 53–238 enclose the BPL/LPL catalytic domain; that stretch reads ADTGDEIWVV…NLDGASAAAD (186 aa). Substrate contacts are provided by residues 93-100, 165-167, and 178-180; these read RGGQITYH, ALG, and GLS. Cysteine 196 functions as the Acyl-thioester intermediate in the catalytic mechanism.

This sequence belongs to the LipB family.

The protein localises to the cytoplasm. It carries out the reaction octanoyl-[ACP] + L-lysyl-[protein] = N(6)-octanoyl-L-lysyl-[protein] + holo-[ACP] + H(+). It functions in the pathway protein modification; protein lipoylation via endogenous pathway; protein N(6)-(lipoyl)lysine from octanoyl-[acyl-carrier-protein]: step 1/2. Catalyzes the transfer of endogenously produced octanoic acid from octanoyl-acyl-carrier-protein onto the lipoyl domains of lipoate-dependent enzymes. Lipoyl-ACP can also act as a substrate although octanoyl-ACP is likely to be the physiological substrate. The polypeptide is Octanoyltransferase (Burkholderia orbicola (strain MC0-3)).